We begin with the raw amino-acid sequence, 192 residues long: Phosphoheptose isomerase (192 aa).

One can recognise an SIS domain in the interval 36 to 192; sequence CVDSLAAGGK…DQVEAVAAPA (157 aa). 51–53 serves as a coordination point for substrate; sequence NGG. Zn(2+)-binding residues include His60 and Glu64. Residues Glu64, 93–94, 119–121, Ser124, and Gln171 contribute to the substrate site; these read ND and TTS. The Zn(2+) site is built by Gln171 and His179.

It belongs to the SIS family. GmhA subfamily. In terms of assembly, homotetramer. Zn(2+) serves as cofactor.

It localises to the cytoplasm. It catalyses the reaction 2 D-sedoheptulose 7-phosphate = D-glycero-alpha-D-manno-heptose 7-phosphate + D-glycero-beta-D-manno-heptose 7-phosphate. It functions in the pathway carbohydrate biosynthesis; D-glycero-D-manno-heptose 7-phosphate biosynthesis; D-glycero-alpha-D-manno-heptose 7-phosphate and D-glycero-beta-D-manno-heptose 7-phosphate from sedoheptulose 7-phosphate: step 1/1. Its function is as follows. Catalyzes the isomerization of sedoheptulose 7-phosphate in D-glycero-D-manno-heptose 7-phosphate. The polypeptide is Phosphoheptose isomerase (Paramagnetospirillum magneticum (strain ATCC 700264 / AMB-1) (Magnetospirillum magneticum)).